Consider the following 144-residue polypeptide: uncharacterized protein (144 aa).

It belongs to the mimivirus L885/R898 family.

This is an uncharacterized protein from Acanthamoeba polyphaga (Amoeba).